The following is a 293-amino-acid chain: MEGALDAQSLISLSLRKIHNSRTQRGGIKLHKNLLVSYVLRNARQLYLSERYAELYRRQPFPQTMDECDEPDIPELSPLQIPEEGEDEMHQLPRIHSGGAELLEPLSSEETLELPPCAHSPHPAKEPQSHAAFYSPVPSRGFCSSGESAGPPQCSHTTVLDLDTHVVTTVESGYLHQDCPCQGAPLLSKRKYAPAGYGSYSGHGGPGEDLGDTAEPSFVPCKRGRYEDFCPQPLGEPADSNNNNISNLISIFGSGFSGLMSRQTEAEQTLNGHLCGKHALGSLGAWTRAIVAF.

Belongs to the IER family.

The sequence is that of Immediate early response gene 5-like protein (ier5l) from Xenopus laevis (African clawed frog).